Here is a 271-residue protein sequence, read N- to C-terminus: Uridine-cytidine kinase 1-A (271 aa).

Gly24–Thr32 serves as a coordination point for ATP. Residues Asp81, Tyr109, His114, Arg163, Arg172, and Gln180 each coordinate substrate. Residue Asp209 coordinates ATP. Positions Ser241–His271 are disordered. The segment covering Thr262 to His271 has biased composition (basic and acidic residues).

The protein belongs to the uridine kinase family.

It carries out the reaction uridine + ATP = UMP + ADP + H(+). It catalyses the reaction cytidine + ATP = CMP + ADP + H(+). The protein operates within pyrimidine metabolism; CTP biosynthesis via salvage pathway; CTP from cytidine: step 1/3. Its pathway is pyrimidine metabolism; UMP biosynthesis via salvage pathway; UMP from uridine: step 1/1. Phosphorylates uridine and cytidine to uridine monophosphate and cytidine monophosphate. Does not phosphorylate deoxyribonucleosides or purine ribonucleosides. Can use ATP or GTP as a phosphate donor. The sequence is that of Uridine-cytidine kinase 1-A (uck1-a) from Xenopus laevis (African clawed frog).